The primary structure comprises 282 residues: Secretory carrier-associated membrane protein 3 (282 aa).

The interval 1–36 (MAGKHGRNGFEDDDVNPFAGGSVPPANNSRLPPLSH) is disordered. The Cytoplasmic portion of the chain corresponds to 1 to 117 (MAGKHGRNGF…EIPIHLQRMQ (117 aa)). Residues 48-92 (LDSSKDLKKKEKELQAMEAELNKRERELKRKEEAAAQAGIVIEDK) are a coiled coil. 4 helical membrane-spanning segments follow: residues 118 to 138 (YLAF…IIAT), 148 to 168 (VIIW…AYVL), 185 to 205 (FGWF…AAVA), and 230 to 250 (IVGI…LLSI). Over 251-282 (GVIQQVYMYFRGSGKAAEMKREAARGALSSAF) the chain is Cytoplasmic.

This sequence belongs to the SCAMP family.

The protein resides in the cell membrane. Its subcellular location is the cytoplasmic vesicle. It localises to the secretory vesicle membrane. Probably involved in membrane trafficking. The chain is Secretory carrier-associated membrane protein 3 (SCAMP3) from Oryza sativa subsp. japonica (Rice).